The following is a 115-amino-acid chain: Holo-[acyl-carrier-protein] synthase (115 aa).

Asp6 and Glu51 together coordinate Mg(2+).

Belongs to the P-Pant transferase superfamily. AcpS family. Mg(2+) serves as cofactor.

It localises to the cytoplasm. It catalyses the reaction apo-[ACP] + CoA = holo-[ACP] + adenosine 3',5'-bisphosphate + H(+). In terms of biological role, transfers the 4'-phosphopantetheine moiety from coenzyme A to a Ser of acyl-carrier-protein. In Campylobacter jejuni subsp. jejuni serotype O:2 (strain ATCC 700819 / NCTC 11168), this protein is Holo-[acyl-carrier-protein] synthase.